The chain runs to 222 residues: Large ribosomal subunit protein uL4 (222 aa).

Residues 42–100 (AAGRQGTHSTKTRGEVRGGGKKPYRQKGTGRARQGSVRAPQFTGGGTVHGPKPRDYAQR) form a disordered region. Positions 60-71 (GGKKPYRQKGTG) are enriched in basic residues.

It belongs to the universal ribosomal protein uL4 family. Part of the 50S ribosomal subunit.

Functionally, one of the primary rRNA binding proteins, this protein initially binds near the 5'-end of the 23S rRNA. It is important during the early stages of 50S assembly. It makes multiple contacts with different domains of the 23S rRNA in the assembled 50S subunit and ribosome. In terms of biological role, forms part of the polypeptide exit tunnel. The polypeptide is Large ribosomal subunit protein uL4 (Thermobifida fusca (strain YX)).